The primary structure comprises 643 residues: Complement component C1q receptor (643 aa).

The first 23 residues, 1 to 23 (MVTSTGLLLLLGLLGQLWAGAAA), serve as a signal peptide directing secretion. Residues 24–571 (DSEAVVCEGT…HSDSDTDGQK (548 aa)) are Extracellular-facing. The C-type lectin domain occupies 31–173 (EGTACYTAHW…CGTPDAPGNS (143 aa)). Intrachain disulfides connect Cys140–Cys164, Cys261–Cys272, Cys268–Cys282, Cys284–Cys297, Cys303–Cys314, Cys308–Cys325, Cys327–Cys340, Cys346–Cys355, Cys351–Cys364, Cys366–Cys380, Cys386–Cys397, Cys393–Cys406, Cys408–Cys422, Cys428–Cys437, Cys433–Cys446, and Cys448–Cys461. 2 EGF-like domains span residues 257 to 298 (PKFG…VTCA) and 299 to 341 (SRNP…VHCV). N-linked (GlcNAc...) asparagine glycosylation is present at Asn322. The EGF-like 3; calcium-binding domain occupies 342-381 (DIDECEDSPCDQECINTPGGFHCECWVGYQSSGSKEEACE). Positions 382–423 (DVDECTAAYSPCAQGCTNTDGSFYCSCKEGYIMSGEDSTQCE) constitute an EGF-like 4; calcium-binding domain. Residues 424–462 (DIDECLGNPCDTLCINTDGSFRCGCPAGFELAPNGVSCT) enclose the EGF-like 5; calcium-binding domain. The interval 469 to 517 (ELPARPPQKEDKGDGKESTVPLTEMPGSLNGSKDVSNRAQTTDLSIQSD) is disordered. The span at 475–485 (PQKEDKGDGKE) shows a compositional bias: basic and acidic residues. Positions 497–517 (LNGSKDVSNRAQTTDLSIQSD) are enriched in polar residues. Asn498 carries an N-linked (GlcNAc...) asparagine glycan. A helical transmembrane segment spans residues 572 to 592 (LLLFYILGTVVAISLLLALAL). Residues 593 to 643 (GLLIYLKRKAKKEEIKEKKAQNAADSYSWIPERAESRAPENQYSPTPGTDC) lie on the Cytoplasmic side of the membrane. Residues 606–643 (EIKEKKAQNAADSYSWIPERAESRAPENQYSPTPGTDC) are disordered. Phosphoserine is present on Ser618. Phosphotyrosine occurs at positions 619 and 635. Positions 631-643 (PENQYSPTPGTDC) are enriched in polar residues.

In terms of assembly, homodimer. Interacts with C1QBP; the association may represent a cell surface C1q receptor. Interacts with surfactant protein A/SFTPA1. Interacts with multimerin-2/MMRN2. Interacts with DAG1; this interaction plays an important role in endothelial cell migration. Interacts with CBL. Interacts with IGFBP7. Interacts with VEGFR2. Post-translationally, N- and O-glycosylated. Phosphorylated on Tyr-619 and Tyr-635 by SRC; these phosphorylations promote endothelial cell adhesion and migration. In terms of tissue distribution, widely expressed. Highly expressed in lung and heart. Expressed at lower level in brain, thymus, liver, spleen, intestine, kidney, adrenal gland, muscle and testis. Expressed on endothelial cells, platelets, undifferentiated monocytes and circulating natural killer cells.

The protein resides in the cell membrane. Its function is as follows. Cell surface receptor that plays a role in various physiological processes including inflammation, phagocytosis, and cell adhesion. Plays a role in phagocytosis and enhances the uptake of apoptotic cells and immune complexes by acting as a receptor for defense collagens including surfactant protein A/SFTPA1, C1q, and mannose-binding lectin (MBL2). Plays a role in the regulation of endothelial cell function and adhesion by activating angiogenesis. Mechanistically, exerts its angiogenic function by associating with beta-dystroglycan, leading to SRC-dependent phosphorylation and subsequent recruitment of CBL. In turn, CBL provides a docking site for downstream signaling components, such as CRKL to enhance cell migration. Participates in angiogenesis also by acting as a receptor for the ECM pan-endothelial glycoprotein multimerin-2/MMRN2 and IGFBP7 ligands. Both ligands play a non-redundant role in CD93-mediated endothelial cell function. Acts as a key regulator of endothelial barrier function through modulating VEGFR2 function. The protein is Complement component C1q receptor (Cd93) of Rattus norvegicus (Rat).